Here is a 159-residue protein sequence, read N- to C-terminus: Ribosomal RNA large subunit methyltransferase H (159 aa).

S-adenosyl-L-methionine is bound by residues Leu-76 and Gly-108.

This sequence belongs to the RNA methyltransferase RlmH family. Homodimer.

Its subcellular location is the cytoplasm. It carries out the reaction pseudouridine(1915) in 23S rRNA + S-adenosyl-L-methionine = N(3)-methylpseudouridine(1915) in 23S rRNA + S-adenosyl-L-homocysteine + H(+). Specifically methylates the pseudouridine at position 1915 (m3Psi1915) in 23S rRNA. This chain is Ribosomal RNA large subunit methyltransferase H, found in Lactiplantibacillus plantarum (strain ATCC BAA-793 / NCIMB 8826 / WCFS1) (Lactobacillus plantarum).